Reading from the N-terminus, the 81-residue chain is Protein RALF-like 7 (81 aa).

The first 29 residues, 1–29 (MSARKKNRIHVFFVSIMIIISLVSGFGEG), serve as a signal peptide directing secretion. Intrachain disulfides connect cysteine 46/cysteine 54 and cysteine 66/cysteine 72.

The protein belongs to the plant rapid alkalinization factor (RALF) family.

Its subcellular location is the secreted. Cell signaling peptide that may regulate plant stress, growth, and development. Mediates a rapid alkalinization of extracellular space by mediating a transient increase in the cytoplasmic Ca(2+) concentration leading to a calcium-dependent signaling events through a cell surface receptor and a concomitant activation of some intracellular mitogen-activated protein kinases. The protein is Protein RALF-like 7 (RALFL7) of Arabidopsis thaliana (Mouse-ear cress).